The chain runs to 184 residues: 3-hydroxyanthranilate 3,4-dioxygenase (184 aa).

Residue Arg-44 participates in O2 binding. Fe cation-binding residues include His-48, Glu-54, and His-92. Position 54 (Glu-54) interacts with substrate. Substrate-binding residues include Arg-96 and Glu-106. A divalent metal cation-binding residues include Cys-121, Cys-126, Cys-162, and Cys-165.

The protein belongs to the 3-HAO family. Requires Fe(2+) as cofactor.

The protein localises to the cytoplasm. It catalyses the reaction 3-hydroxyanthranilate + O2 = (2Z,4Z)-2-amino-3-carboxymuconate 6-semialdehyde. Its pathway is cofactor biosynthesis; NAD(+) biosynthesis; quinolinate from L-kynurenine: step 3/3. Its function is as follows. Catalyzes the oxidative ring opening of 3-hydroxyanthranilate to 2-amino-3-carboxymuconate semialdehyde, which spontaneously cyclizes to quinolinate. The polypeptide is 3-hydroxyanthranilate 3,4-dioxygenase (Pyricularia oryzae (strain 70-15 / ATCC MYA-4617 / FGSC 8958) (Rice blast fungus)).